A 132-amino-acid polypeptide reads, in one-letter code: Small ribosomal subunit protein uS11 (132 aa).

The protein belongs to the universal ribosomal protein uS11 family. As to quaternary structure, part of the 30S ribosomal subunit.

Functionally, located on the platform of the 30S subunit. This is Small ribosomal subunit protein uS11 from Sulfurisphaera tokodaii (strain DSM 16993 / JCM 10545 / NBRC 100140 / 7) (Sulfolobus tokodaii).